A 411-amino-acid polypeptide reads, in one-letter code: RNA binding protein fox-1 homolog 2 (411 aa).

The segment at 16–175 (TRGTKRESDQ…SETKASPKRL (160 aa)) is disordered. Polar residues-rich tracts occupy residues 58 to 83 (PVSQ…TPDT) and 99 to 119 (NGLS…QSTE). The span at 135–165 (SAPATSTANASSTTDGSQTEGQQSQSQNNEN) shows a compositional bias: low complexity. Positions 173–249 (KRLHVSNIPF…RKIEVNNATA (77 aa)) constitute an RRM domain.

As to quaternary structure, interacts with papd4/gld2.

It is found in the nucleus. The protein localises to the cytoplasm. Its function is as follows. RNA-binding protein that regulates alternative splicing events by binding to 5'-UGCAUGU-3' elements. Regulates alternative splicing of tissue-specific exons. The chain is RNA binding protein fox-1 homolog 2 (rbfox2) from Xenopus laevis (African clawed frog).